We begin with the raw amino-acid sequence, 286 residues long: tRNA (guanine-N(7)-)-methyltransferase (286 aa).

Residues Gly103, 126 to 127 (EI), 161 to 162 (NA), and Cys181 contribute to the S-adenosyl-L-methionine site. Asp184 is an active-site residue. 259–261 (TEE) is a binding site for S-adenosyl-L-methionine.

Belongs to the class I-like SAM-binding methyltransferase superfamily. TrmB family. Forms a complex with TRM82.

It localises to the nucleus. It carries out the reaction guanosine(46) in tRNA + S-adenosyl-L-methionine = N(7)-methylguanosine(46) in tRNA + S-adenosyl-L-homocysteine. It functions in the pathway tRNA modification; N(7)-methylguanine-tRNA biosynthesis. In terms of biological role, catalyzes the formation of N(7)-methylguanine at position 46 (m7G46) in tRNA. The polypeptide is tRNA (guanine-N(7)-)-methyltransferase (Vanderwaltozyma polyspora (strain ATCC 22028 / DSM 70294 / BCRC 21397 / CBS 2163 / NBRC 10782 / NRRL Y-8283 / UCD 57-17) (Kluyveromyces polysporus)).